The sequence spans 385 residues: Protein kup-1 (385 aa).

Disordered stretches follow at residues 1 to 20 and 326 to 385; these read MDDELDYGSDHSIHGDVRED and SLAS…PDEY. 3 stretches are compositionally biased toward basic and acidic residues: residues 8–20, 339–351, and 364–385; these read GSDHSIHGDVRED, RTDEKDYEKDDIV, and GRVERPIRERIQFPGREDPDEY.

This Caenorhabditis elegans protein is Protein kup-1 (kup-1).